The following is a 288-amino-acid chain: Phosphate import ATP-binding protein PstB (288 aa).

The ABC transporter domain occupies 42 to 283 (IRDLNFYYEN…PKEKKTRDYI (242 aa)). 74-81 (GPSGCGKS) provides a ligand contact to ATP.

Belongs to the ABC transporter superfamily. Phosphate importer (TC 3.A.1.7) family. The complex is composed of two ATP-binding proteins (PstB), two transmembrane proteins (PstC and PstA) and a solute-binding protein (PstS).

It is found in the cell membrane. The catalysed reaction is phosphate(out) + ATP + H2O = ADP + 2 phosphate(in) + H(+). Functionally, part of the ABC transporter complex PstSACB involved in phosphate import. Responsible for energy coupling to the transport system. This chain is Phosphate import ATP-binding protein PstB, found in Malacoplasma penetrans (strain HF-2) (Mycoplasma penetrans).